Here is a 599-residue protein sequence, read N- to C-terminus: Exocyst complex component EXO70B2 (599 aa).

Residues 38–58 form a disordered region; that stretch reads GASGNRGGDPRPTPSRGGSNV.

It belongs to the EXO70 family. As to quaternary structure, self interacts. Interacts with EXO70B1. Interacts with the exocyst subunits EXO70H1, SEC5A and SEC15B. Binds to SNAP33. Subunit of the exocyst complex that mediates vesicle tethering during exocytosis. Binds to PUB22. Post-translationally, target of the E3 ubiquitin-protein ligase PUB22 that mediates its ubiquitination and degradation via the 26S proteasome to attenuate pathogen-associated molecular patterns (PAMP)-induced signaling, especially is response to the bacterial elicitor flg22. As to expression, mostly expressed in leaves and, to a lower extent, in roots, cotyledons, internodes, flower buds, siliques and anthers.

It is found in the cytoplasmic vesicle. The protein resides in the phagosome. Its subcellular location is the cytoplasm. It localises to the nucleus. Its function is as follows. Component of an exocyst subcomplex specifically involved in autophagy-related, Golgi-independent membrane traffic to the vacuole. Regulates autophagosome formation and autophagy-related Golgi-independent import into the vacuole. Positive regulator of defense responses to pathogenic bacteria (e.g. P.syringae pv. maculicola), to the biotrophic oomycete H.arabidopsidis and to fungi (e.g. B.graminis hordei), especially in cell wall apposition formation related to plant defense. Required for both immediate and later responses triggered by pathogen-associated molecular patterns (PAMPs). Positive regulator of abscisic acid (ABA)-independent mannitol (drought)-promoted stomatal closure. This is Exocyst complex component EXO70B2 from Arabidopsis thaliana (Mouse-ear cress).